A 142-amino-acid chain; its full sequence is Multiprotein-bridging factor 1a (142 aa).

Over residues 51-64 the composition is skewed to polar residues; that stretch reads GTNKAASSGTSLNT. The disordered stretch occupies residues 51-77; the sequence is GTNKAASSGTSLNTKMLDDDTENLTHE. In terms of domain architecture, HTH cro/C1-type spans 87–141; that stretch reads IMQARTDKKLTQSQLAQIINEKPQVIQEYESGKAIPNQQILSKLERALGAKLRGK. The segment at residues 98 to 117 is a DNA-binding region (H-T-H motif); the sequence is QSQLAQIINEKPQVIQEYES.

It belongs to the MBF1 family. As to expression, expressed in leaves, roots, stems, flowers, siliques and shoots. Detected only in anthers and some seeds in siliques.

The protein localises to the nucleus. The protein resides in the nucleolus. Transcriptional coactivator that stimulates transcriptional activity by bridging regulatory proteins and TBP, thereby recruiting TBP to promoters occupied by DNA-binding regulators. The sequence is that of Multiprotein-bridging factor 1a (MBF1A) from Arabidopsis thaliana (Mouse-ear cress).